Reading from the N-terminus, the 705-residue chain is Putative membrane protein SCO0839 (705 aa).

The next 12 membrane-spanning stretches (helical) occupy residues 16-36 (WLVP…LGPY), 177-197 (GIDG…LLLV), 202-222 (LLPL…CAIV), 237-257 (VQGI…LLLT), 281-301 (SWGA…ALLL), 316-336 (IGIV…LVLL), 373-393 (IWAL…TLSS), 529-549 (LIVP…LRSL), 554-574 (LLVA…ALVF), 587-607 (VPLY…IFLM), 627-647 (LTAT…TFAA), and 648-668 (LGVI…FGVL).

It belongs to the resistance-nodulation-cell division (RND) (TC 2.A.6) family. MmpL subfamily.

Its subcellular location is the cell membrane. The chain is Putative membrane protein SCO0839 from Streptomyces coelicolor (strain ATCC BAA-471 / A3(2) / M145).